A 460-amino-acid chain; its full sequence is Kynurenine 3-monooxygenase (460 aa).

It belongs to the aromatic-ring hydroxylase family. KMO subfamily. Requires FAD as cofactor.

Its subcellular location is the mitochondrion. It carries out the reaction L-kynurenine + NADPH + O2 + H(+) = 3-hydroxy-L-kynurenine + NADP(+) + H2O. It participates in cofactor biosynthesis; NAD(+) biosynthesis; quinolinate from L-kynurenine: step 1/3. Functionally, catalyzes the hydroxylation of L-kynurenine (L-Kyn) to form 3-hydroxy-L-kynurenine (L-3OHKyn). Required for synthesis of quinolinic acid. The sequence is that of Kynurenine 3-monooxygenase from Dictyostelium discoideum (Social amoeba).